The primary structure comprises 307 residues: MKGIIYKSTGSWYLVKAEDGTYYNARLRGKFKHLDLKVTNPLSVGDFVDMNIDPLTPTEAMIFNIEPRTNYIIRRSSHKTAFGHLIACNIDQSILLVTLKQPKTSIGFIDRFLISCEAFRIPAVIVFNKSDLYNEALMEEYLYLKDVYEPLGYRCILTSMEKENGLDELMPLLQNKISVVSGHSGVGKSTLINKIFPQLDIKTDIISDHSQKGKHTTTFAEMYDLNETSKVIDTPGIKELGLFEIENDVLSHYFPEMRSLMGQCRFHNCKHTNEPGCRVKEYVEAFKIAPTRYESYCSIIFEKDTHR.

Residues 78–240 (HKTAFGHLIA…VIDTPGIKEL (163 aa)) enclose the CP-type G domain. Residues 128–131 (NKSD) and 182–190 (GHSGVGKST) each bind GTP. Zn(2+)-binding residues include C264, C269, H271, and C277.

The protein belongs to the TRAFAC class YlqF/YawG GTPase family. RsgA subfamily. Monomer. Associates with 30S ribosomal subunit, binds 16S rRNA. Zn(2+) serves as cofactor.

It localises to the cytoplasm. Its function is as follows. One of several proteins that assist in the late maturation steps of the functional core of the 30S ribosomal subunit. Helps release RbfA from mature subunits. May play a role in the assembly of ribosomal proteins into the subunit. Circularly permuted GTPase that catalyzes slow GTP hydrolysis, GTPase activity is stimulated by the 30S ribosomal subunit. This is Small ribosomal subunit biogenesis GTPase RsgA from Cytophaga hutchinsonii (strain ATCC 33406 / DSM 1761 / CIP 103989 / NBRC 15051 / NCIMB 9469 / D465).